The sequence spans 59 residues: Large ribosomal subunit protein uL30 (59 aa).

Belongs to the universal ribosomal protein uL30 family. Part of the 50S ribosomal subunit.

In Lactococcus lactis subsp. lactis (strain IL1403) (Streptococcus lactis), this protein is Large ribosomal subunit protein uL30.